A 307-amino-acid chain; its full sequence is Elongation factor Ts (307 aa).

The involved in Mg(2+) ion dislocation from EF-Tu stretch occupies residues 79 to 82 (TDFV).

The protein belongs to the EF-Ts family.

It is found in the cytoplasm. Its function is as follows. Associates with the EF-Tu.GDP complex and induces the exchange of GDP to GTP. It remains bound to the aminoacyl-tRNA.EF-Tu.GTP complex up to the GTP hydrolysis stage on the ribosome. This Rhizobium meliloti (strain 1021) (Ensifer meliloti) protein is Elongation factor Ts.